The sequence spans 194 residues: Small ribosomal subunit protein uS4c (194 aa).

The disordered stretch occupies residues 13-36; it reads GLTSKRPRSGSDPKNQLRSGKKSQ. Residues 82–143 enclose the S4 RNA-binding domain; the sequence is MRLDNILFRL…KQRSKALIQN (62 aa).

The protein belongs to the universal ribosomal protein uS4 family. As to quaternary structure, part of the 30S ribosomal subunit. Contacts protein S5. The interaction surface between S4 and S5 is involved in control of translational fidelity.

The protein resides in the plastid. It is found in the chloroplast. One of the primary rRNA binding proteins, it binds directly to 16S rRNA where it nucleates assembly of the body of the 30S subunit. In terms of biological role, with S5 and S12 plays an important role in translational accuracy. The polypeptide is Small ribosomal subunit protein uS4c (rps4) (Moraea spathulata (Large yellow moraea)).